The following is a 753-amino-acid chain: Pesticidal crystal protein Cry20Aa (753 aa).

Positions 680 to 696 (DTTYQPSYDNYNQNASG) are enriched in polar residues. The interval 680-721 (DTTYQPSYDNYNQNASGTYDDGYNPNASDSYDQSYTNNYSQN) is disordered. The span at 712-721 (QSYTNNYSQN) shows a compositional bias: low complexity.

This sequence belongs to the delta endotoxin family. In terms of processing, has low mosquitocidal activity probably due to rapid proteolysis to inactive 56 kDa and 43 kDa proteins.

Promotes colloidosmotic lysis by binding to the midgut epithelial cells of mosquitos. Active against Aedes aegypti and Culex quinquefasciatus larvae. The polypeptide is Pesticidal crystal protein Cry20Aa (cry20Aa) (Bacillus thuringiensis subsp. fukuokaensis).